The primary structure comprises 207 residues: High frequency lysogenization protein HflD homolog (207 aa).

The protein belongs to the HflD family.

It is found in the cytoplasm. It localises to the cell inner membrane. In Pseudomonas fluorescens (strain ATCC BAA-477 / NRRL B-23932 / Pf-5), this protein is High frequency lysogenization protein HflD homolog.